The following is a 330-amino-acid chain: Phenylalanine--tRNA ligase alpha subunit (330 aa).

E246 lines the Mg(2+) pocket.

The protein belongs to the class-II aminoacyl-tRNA synthetase family. Phe-tRNA synthetase alpha subunit type 1 subfamily. Tetramer of two alpha and two beta subunits. Requires Mg(2+) as cofactor.

It is found in the cytoplasm. The enzyme catalyses tRNA(Phe) + L-phenylalanine + ATP = L-phenylalanyl-tRNA(Phe) + AMP + diphosphate + H(+). The protein is Phenylalanine--tRNA ligase alpha subunit of Campylobacter jejuni subsp. jejuni serotype O:6 (strain 81116 / NCTC 11828).